The sequence spans 127 residues: Group 3 truncated hemoglobin ctb (127 aa).

Residues Tyr64 and His72 each coordinate heme.

This sequence belongs to the truncated hemoglobin family. Group III subfamily. In terms of assembly, monomer. Heme serves as cofactor.

The protein localises to the cytoplasm. Functionally, has been suggested to be involved in cytochrome c peroxidase or P450-like oxygen chemistry or cyanide detoxification. The high oxygen affinity of this protein suggests that it probably does not function as an oxygen transporter. This chain is Group 3 truncated hemoglobin ctb (ctb), found in Campylobacter jejuni subsp. jejuni serotype O:2 (strain ATCC 700819 / NCTC 11168).